The chain runs to 179 residues: Cell division protein SepF (179 aa).

The segment at 18 to 55 is disordered; the sequence is EDSSLPYEKRDEPVFTPVNSSQEPALPMNQPSQSAGTK. Over residues 34–55 the composition is skewed to polar residues; the sequence is PVNSSQEPALPMNQPSQSAGTK.

It belongs to the SepF family. In terms of assembly, homodimer. Interacts with FtsZ.

The protein localises to the cytoplasm. Its function is as follows. Cell division protein that is part of the divisome complex and is recruited early to the Z-ring. Probably stimulates Z-ring formation, perhaps through the cross-linking of FtsZ protofilaments. Its function overlaps with FtsA. The sequence is that of Cell division protein SepF from Streptococcus pneumoniae (strain ATCC 700669 / Spain 23F-1).